The primary structure comprises 106 residues: SH3 domain-binding glutamic acid-rich-like protein 2-A (106 aa).

The SH3-binding motif lies at 61-67 (QGNPLPP).

It belongs to the SH3BGR family.

It is found in the nucleus. The sequence is that of SH3 domain-binding glutamic acid-rich-like protein 2-A (sh3bgrl2-a) from Xenopus laevis (African clawed frog).